The primary structure comprises 319 residues: Putative peptide permease protein BRA0408/BS1330_II0405 (319 aa).

6 consecutive transmembrane segments (helical) span residues L9–L29, L102–I122, L138–F158, L182–M202, L242–I262, and Y284–L304. Residues I98–T305 enclose the ABC transmembrane type-1 domain.

Belongs to the binding-protein-dependent transport system permease family. In terms of assembly, the complex is composed of two ATP-binding proteins (BRA0404 and BRA0405), two transmembrane proteins (BRA0407 and BRA0408) and a solute-binding protein (BRA0409).

Its subcellular location is the cell inner membrane. Probably part of an ABC transporter complex that could be involved in peptide import. Probably responsible for the translocation of the substrate across the membrane. This chain is Putative peptide permease protein BRA0408/BS1330_II0405, found in Brucella suis biovar 1 (strain 1330).